Here is a 196-residue protein sequence, read N- to C-terminus: Shikimate kinase (196 aa).

21-26 (GTGKSR) provides a ligand contact to ATP. S25 contributes to the Mg(2+) binding site. Substrate contacts are provided by D43, R67, and G89. R126 is an ATP binding site. R145 serves as a coordination point for substrate. R161 is an ATP binding site.

The protein belongs to the shikimate kinase family. As to quaternary structure, monomer. It depends on Mg(2+) as a cofactor.

It is found in the cytoplasm. It catalyses the reaction shikimate + ATP = 3-phosphoshikimate + ADP + H(+). It participates in metabolic intermediate biosynthesis; chorismate biosynthesis; chorismate from D-erythrose 4-phosphate and phosphoenolpyruvate: step 5/7. Functionally, catalyzes the specific phosphorylation of the 3-hydroxyl group of shikimic acid using ATP as a cosubstrate. The protein is Shikimate kinase of Deinococcus radiodurans (strain ATCC 13939 / DSM 20539 / JCM 16871 / CCUG 27074 / LMG 4051 / NBRC 15346 / NCIMB 9279 / VKM B-1422 / R1).